We begin with the raw amino-acid sequence, 1066 residues long: MHKASSSKKSFDDTIELKKNEQLLKLINSSEFTLHNCVELLCKHSENIGIHYYLCQKLATFPHSELQFYIPQLVQVLVTMETESMALEDLLLRLRAENPHFALLTFWQLQALLTDLSTDPASYGFQVARRVLNNLQTNLFNTSSGSDKNVKIHENVAPALVLSSMIMSAIAFPQLSEVTKPLVESQGRRQKAFVFKLARSAMKDFTKNMTLKNTLLNKKTSRSKRVSSNRSSTPTSPIDLIDPIKTKEDASFRKSRHSEVKLDFDIVDDIGNQVFEERISSSIKLPKRKPKYLDNSYVHRTYDGKNINRDGSISNTAKALDGNKGDYISPKGRNDENNEIGNNEDETGGETEEDADALNSDHFTSSMPDLHNIQPRTSSASSASLEGTPKLNRTNSQPLSRQAFKNSKKANSSLSQEIDLSQLSTTSKIKMLKANYFRCETQFAIALETISQRLARVPTEARLSALRAELFLLNRDLPAEVDIPTLLPPNKKGKLHKLVTITANEAQVLNSAEKVPYLLLIEYLRDEFDFDPTSETNERLLKKISGNQGGLIFDLNYMNRKENNENRNESTLTSNNTRSSVYDSNSFNNGASRNEGLSSTSRSDSASTAHVRTEVNKEEDLGDMSMVKVRNRTDDEAYRNALVIQSAANVPILPDDSQDRSPELNFGSNLDEVLIENGINSKNIHSQTDALADQMRVSAVMLAQLDKSPQQLSESTKQIRAQIISSMKEVQDKFGYHDLEALHGMAGERKLENDLMTGGIDTSYLGEDWATKKERIRKTSEYGHFENWDLCSVIAKTGDDLRQEAFAYQMIQAMANIWVKEKVDVWVKRMKILITSANTGLVETITNAMSVHSIKKALTKKMIEDAELDDKGGIASLNDHFLRAFGNPNGFKYRRAQDNFASSLAAYSVICYLLQVKDRHNGNIMIDNEGHVSHIDFGFMLSNSPGSVGFEAAPFKLTYEYIELLGGVEGEAFKKFVELTKSSFKALRKYADQIVSMCEIMQKDNMQPCFDAGEQTSVQLRQRFQLDLSEKEVDDFVENFLIGKSLGSIYTRIYDQFQLITQGIYS.

The PIK helical domain maps to 1 to 133; the sequence is MHKASSSKKS…GFQVARRVLN (133 aa). Phosphoserine is present on residues Ser10 and Ser236. 3 disordered regions span residues 218 to 240, 303 to 411, and 564 to 624; these read KKTS…PIDL, DGKN…KKAN, and NENR…LGDM. A compositionally biased stretch (acidic residues) spans 342-356; sequence NNEDETGGETEEDAD. Composition is skewed to polar residues over residues 374-411 and 570-597; these read QPRT…KKAN and STLT…NEGL. Ser384 carries the phosphoserine modification. Position 394 is a phosphothreonine (Thr394). A phosphoserine mark is found at Ser396 and Ser592. Residues 598–609 are compositionally biased toward low complexity; the sequence is SSTSRSDSASTA. Residues 770–1049 form the PI3K/PI4K catalytic domain; it reads ATKKERIRKT…FLIGKSLGSI (280 aa). Residues 776–782 are G-loop; it reads IRKTSEY. Positions 915–923 are catalytic loop; that stretch reads QVKDRHNGN. The activation loop stretch occupies residues 934–958; that stretch reads HIDFGFMLSNSPGSVGFEAAPFKLT.

This sequence belongs to the PI3/PI4-kinase family. Type III PI4K subfamily. As to quaternary structure, interacts with FRQ1.

The protein localises to the nucleus. It is found in the golgi apparatus. The protein resides in the trans-Golgi network. It carries out the reaction a 1,2-diacyl-sn-glycero-3-phospho-(1D-myo-inositol) + ATP = a 1,2-diacyl-sn-glycero-3-phospho-(1D-myo-inositol 4-phosphate) + ADP + H(+). In terms of biological role, acts on phosphatidylinositol (PI) in the first committed step in the production of the second messenger inositol 1,4,5,-trisphosphate. PIK1 is part of a nuclear phosphoinositide cycle and could control cytokinesis through the actin cytoskeleton. Involved in the response to mating pheromone. The polypeptide is Phosphatidylinositol 4-kinase PIK1 (Saccharomyces cerevisiae (strain ATCC 204508 / S288c) (Baker's yeast)).